We begin with the raw amino-acid sequence, 462 residues long: Argininosuccinate lyase (462 aa).

It belongs to the lyase 1 family. Argininosuccinate lyase subfamily.

It localises to the cytoplasm. It catalyses the reaction 2-(N(omega)-L-arginino)succinate = fumarate + L-arginine. It functions in the pathway amino-acid biosynthesis; L-arginine biosynthesis; L-arginine from L-ornithine and carbamoyl phosphate: step 3/3. The polypeptide is Argininosuccinate lyase (Streptococcus agalactiae serotype Ia (strain ATCC 27591 / A909 / CDC SS700)).